Consider the following 382-residue polypeptide: ATP phosphoribosyltransferase regulatory subunit (382 aa).

The protein belongs to the class-II aminoacyl-tRNA synthetase family. HisZ subfamily. Heteromultimer composed of HisG and HisZ subunits.

It localises to the cytoplasm. It participates in amino-acid biosynthesis; L-histidine biosynthesis; L-histidine from 5-phospho-alpha-D-ribose 1-diphosphate: step 1/9. Required for the first step of histidine biosynthesis. May allow the feedback regulation of ATP phosphoribosyltransferase activity by histidine. This is ATP phosphoribosyltransferase regulatory subunit from Burkholderia cenocepacia (strain ATCC BAA-245 / DSM 16553 / LMG 16656 / NCTC 13227 / J2315 / CF5610) (Burkholderia cepacia (strain J2315)).